The sequence spans 101 residues: Cilia- and flagella-associated protein 141 (101 aa).

As to quaternary structure, microtubule inner protein component of sperm flagellar doublet microtubules. In terms of tissue distribution, expressed in trachea multiciliated cells.

It is found in the cytoplasm. It localises to the cytoskeleton. The protein resides in the cilium axoneme. The protein localises to the flagellum axoneme. Its function is as follows. Microtubule inner protein (MIP) part of the dynein-decorated doublet microtubules (DMTs) in cilia axoneme, which is required for motile cilia beating. The polypeptide is Cilia- and flagella-associated protein 141 (Bos taurus (Bovine)).